We begin with the raw amino-acid sequence, 261 residues long: Large ribosomal subunit protein uL10m (261 aa).

Residues 1–28 (MAAAVAGMLRGGLLPQAGRLPTLQTVRY) constitute a mitochondrion transit peptide. Positions 242–261 (EKDSVMSANGKPDPDTVPDS) are disordered.

It belongs to the universal ribosomal protein uL10 family. In terms of assembly, component of the mitochondrial large ribosomal subunit (mt-LSU). Mature mammalian 55S mitochondrial ribosomes consist of a small (28S) and a large (39S) subunit. The 28S small subunit contains a 12S ribosomal RNA (12S mt-rRNA) and 30 different proteins. The 39S large subunit contains a 16S rRNA (16S mt-rRNA), a copy of mitochondrial valine transfer RNA (mt-tRNA(Val)), which plays an integral structural role, and 52 different proteins. uL10m contributes a single cysteine residue to a zinc-binding site with mL66.

The protein localises to the mitochondrion. This Homo sapiens (Human) protein is Large ribosomal subunit protein uL10m (MRPL10).